The following is a 347-amino-acid chain: Spermidine/putrescine import ATP-binding protein PotA (347 aa).

One can recognise an ABC transporter domain in the interval 6 to 238 (LEIRNLSHYY…PKTKFVADFI (233 aa)). ATP is bound at residue 40 to 47 (GPSGCGKT).

Belongs to the ABC transporter superfamily. Spermidine/putrescine importer (TC 3.A.1.11.1) family. As to quaternary structure, the complex is composed of two ATP-binding proteins (PotA), two transmembrane proteins (PotB and PotC) and a solute-binding protein (PotD).

Its subcellular location is the cell inner membrane. It catalyses the reaction ATP + H2O + polyamine-[polyamine-binding protein]Side 1 = ADP + phosphate + polyamineSide 2 + [polyamine-binding protein]Side 1.. Its function is as follows. Part of the ABC transporter complex PotABCD involved in spermidine/putrescine import. Responsible for energy coupling to the transport system. This chain is Spermidine/putrescine import ATP-binding protein PotA, found in Borrelia garinii subsp. bavariensis (strain ATCC BAA-2496 / DSM 23469 / PBi) (Borreliella bavariensis).